Reading from the N-terminus, the 146-residue chain is Protein LDOC1 (146 aa).

This sequence belongs to the LDOC1 family. In terms of assembly, interacts with NOD2. As to expression, ubiquitously expressed with high levels in brain ant thyroid and low expression in placenta, liver and leukocytes. Expressed as well in six of the seven human breast cancer cell lines examined.

Its subcellular location is the nucleus. May have an important role in the development and/or progression of some cancers. The polypeptide is Protein LDOC1 (LDOC1) (Homo sapiens (Human)).